Reading from the N-terminus, the 61-residue chain is Small ribosomal subunit protein uS14 (61 aa).

Residues Cys-24, Cys-27, Cys-40, and Cys-43 each coordinate Zn(2+).

It belongs to the universal ribosomal protein uS14 family. Zinc-binding uS14 subfamily. In terms of assembly, part of the 30S ribosomal subunit. Contacts proteins S3 and S10. It depends on Zn(2+) as a cofactor.

In terms of biological role, binds 16S rRNA, required for the assembly of 30S particles and may also be responsible for determining the conformation of the 16S rRNA at the A site. The protein is Small ribosomal subunit protein uS14 of Syntrophotalea carbinolica (strain DSM 2380 / NBRC 103641 / GraBd1) (Pelobacter carbinolicus).